The primary structure comprises 380 residues: Erythronate-4-phosphate dehydrogenase (380 aa).

Substrate is bound by residues Ser45 and Thr66. NAD(+)-binding positions include 126–127, Asp146, Thr175, 206–208, and Asp232; these read QV and ASR. Arg208 is an active-site residue. Glu237 is a catalytic residue. Catalysis depends on His254, which acts as the Proton donor. Gly257 contacts NAD(+). Tyr258 serves as a coordination point for substrate.

This sequence belongs to the D-isomer specific 2-hydroxyacid dehydrogenase family. PdxB subfamily. Homodimer.

It is found in the cytoplasm. It catalyses the reaction 4-phospho-D-erythronate + NAD(+) = (R)-3-hydroxy-2-oxo-4-phosphooxybutanoate + NADH + H(+). It functions in the pathway cofactor biosynthesis; pyridoxine 5'-phosphate biosynthesis; pyridoxine 5'-phosphate from D-erythrose 4-phosphate: step 2/5. In terms of biological role, catalyzes the oxidation of erythronate-4-phosphate to 3-hydroxy-2-oxo-4-phosphonooxybutanoate. This is Erythronate-4-phosphate dehydrogenase from Pseudomonas aeruginosa (strain UCBPP-PA14).